Reading from the N-terminus, the 398-residue chain is Mannitol-1-phosphate 5-dehydrogenase (398 aa).

10-21 contributes to the NAD(+) binding site; the sequence is AVHFGAGNIGRG. Residue Lys-221 is part of the active site.

It belongs to the mannitol dehydrogenase family. Monomer.

The enzyme catalyses D-mannitol 1-phosphate + NAD(+) = beta-D-fructose 6-phosphate + NADH + H(+). Functionally, catalyzes the NAD(H)-dependent interconversion of D-fructose 6-phosphate and D-mannitol 1-phosphate in the mannitol metabolic pathway. In Chaetomium globosum (strain ATCC 6205 / CBS 148.51 / DSM 1962 / NBRC 6347 / NRRL 1970) (Soil fungus), this protein is Mannitol-1-phosphate 5-dehydrogenase.